A 348-amino-acid chain; its full sequence is Mitogen-activated protein kinase kinase 5 (348 aa).

Disordered stretches follow at residues 1–26 (MKPIQSPSGVASPMKNRLRKRPDLSL) and 35–54 (LAVPLPLPPPSSSSSAPASS). Phosphoserine; by ASK7 is present on serine 6. Positions 70–325 (LERVNRIGSG…AQQLLQHPFI (256 aa)) constitute a Protein kinase domain. Residues 76-84 (IGSGAGGTV) and lysine 99 each bind ATP. The active-site Proton acceptor is aspartate 187. Threonine 215 bears the Phosphothreonine mark. Position 221 is a phosphoserine; by ASK7 (serine 221). At serine 221 the chain carries Phosphoserine. Position 225 is a phosphothreonine; by ASK7 (threonine 225). At arginine 313 the chain carries ADP-ribosylarginine; by HopF2.

This sequence belongs to the protein kinase superfamily. STE Ser/Thr protein kinase family. MAP kinase kinase subfamily. As to quaternary structure, interacts with P.syringae type III effector HopF2. Interacts with BZR1. Interacts with MPK6 and MPK3. Interacts with RACK1A, RACK1B and RACK1C. Interacts with MAPKKK5 mainly in the cytosol. Binds to BASL. Interacts with MAPKKK20. Post-translationally, phosphorylation at Thr-215 and Ser-221 by MAP kinase kinase kinases positively regulates kinase activity. Phosphorylated by MAPKKK5 and MAPKKK20 in response to abscisic acid (ABA). ADP-ribosylation at Arg-313 by P.syringae type III effector HopF2 reduces the ability of the protein to phosphorylate downstream MPK6. In terms of tissue distribution, expressed higher in stems and leaves than in flowers and roots.

The catalysed reaction is L-seryl-[protein] + ATP = O-phospho-L-seryl-[protein] + ADP + H(+). It carries out the reaction L-threonyl-[protein] + ATP = O-phospho-L-threonyl-[protein] + ADP + H(+). The enzyme catalyses L-tyrosyl-[protein] + ATP = O-phospho-L-tyrosyl-[protein] + ADP + H(+). With respect to regulation, activated through serine and threonine phosphorylation by MEKK1 and MAPKKK20 in response to abscisic acid (ABA). Inhibited through phosphorylation by GSK3/Shaggy-like kinase ASKs. Inhibited through ADP-Ribosylation by P.syringae HopF2. Activated after high light stress. In terms of biological role, mitogen-activated protein kinase kinase (MAPKK) which regulates abscisic acid (ABA) responses in a MAPKKK20-MKK5-MPK6 cascade involved in root growth (e.g. root cell division and elongation) and stomatal response, probably via MAPK6 activation by protein phosphorylation. Involved in the second phase of hydrogen peroxide generation during hypersensitive response-like cell death. Involved in the innate immune MAP kinase signaling cascade (MEKK1, MKK4/MKK5 and MPK3/MPK6) downstream of bacterial flagellin receptor FLS2. Activates by phosphorylation the downstream MPK3 and MPK6. YDA-MKK4/MKK5-MPK3/MPK6 module regulates stomatal cell fate before the guard mother cell (GMC) is specified. This MAPK cascade also functions downstream of the ER receptor in regulating coordinated local cell proliferation, which shapes the morphology of plant organs. MKK4 and MKK5 participate in the regulation of floral organ abscission. Target of the Pseudomonas syringae type III effector HopF2, that inhibits the activation of the downstream MPK6 and PAMP-triggered immunity. Plays a critical role in high light stress tolerance by the mediation of the Cu/Zn SODs CSD1 and CSD2 gene expression. Phosphorylates BZR1 in vitro. This chain is Mitogen-activated protein kinase kinase 5, found in Arabidopsis thaliana (Mouse-ear cress).